Reading from the N-terminus, the 319-residue chain is Malate dehydrogenase (319 aa).

NAD(+)-binding positions include 11–16 (GAGNVG) and Asp36. Substrate-binding residues include Arg85 and Arg91. Residues Asn98 and 121–123 (VSN) each bind NAD(+). Residues Asn123 and Arg154 each coordinate substrate. The active-site Proton acceptor is His178.

It belongs to the LDH/MDH superfamily. MDH type 3 family.

The catalysed reaction is (S)-malate + NAD(+) = oxaloacetate + NADH + H(+). In terms of biological role, catalyzes the reversible oxidation of malate to oxaloacetate. The polypeptide is Malate dehydrogenase (Sulfurimonas denitrificans (strain ATCC 33889 / DSM 1251) (Thiomicrospira denitrificans (strain ATCC 33889 / DSM 1251))).